The primary structure comprises 284 residues: L-ribulose-5-phosphate 3-epimerase UlaE (284 aa).

The protein belongs to the L-ribulose-5-phosphate 3-epimerase family.

It catalyses the reaction L-ribulose 5-phosphate = L-xylulose 5-phosphate. The protein operates within cofactor degradation; L-ascorbate degradation; D-xylulose 5-phosphate from L-ascorbate: step 3/4. In terms of biological role, catalyzes the isomerization of L-xylulose-5-phosphate to L-ribulose-5-phosphate. Is involved in the anaerobic L-ascorbate utilization. The polypeptide is L-ribulose-5-phosphate 3-epimerase UlaE (Salmonella typhi).